The primary structure comprises 414 residues: FAD-dependent monooxygenase adaC (414 aa).

5 residues coordinate FAD: E32, A43, R115, D325, and G338.

This sequence belongs to the paxM FAD-dependent monooxygenase family. FAD serves as cofactor.

The catalysed reaction is 3-(2,4-dioxopentyl)-3,6,8,9-tetrahydroxy-1-oxo-1,2,3,4-tetrahydroanthracene-2-carboxyl-[ACP] + NADPH + O2 + H(+) = 3-(2,4-dioxopentyl)-2,3,6,8,9-pentahydroxy-1-oxo-1,2,3,4-tetrahydroanthracene-2-carboxyl-[ACP] + NADP(+) + H2O. The protein operates within secondary metabolite biosynthesis. Its function is as follows. FAD-dependent monooxygenase; part of the gene cluster that mediates the biosynthesis of the linear tetracyclic TAN-1612 neuropeptide Y receptor antagonist. The decaketide backbone of TAN-1612 is synthesized by the non-reducing polyketide synthase adaA via condensation of one acetyl-CoA starter unit with 9 malonyl-CoA units. The FAD-dependent monooxygenase adaC then performs hydroxylation at C2 while the polaketide chain is still attached to the NRPKS adaA. The alpha-hydroxylation step at C2 appears to be crucial for the following C18-C1 Claisen cyclization and release of the C9-hydroxyl version of TAN-1612 from the NRPKS adaA, two steps performed by the lactamase-like protein adaB. Finally, the O-methyltransferase adaD performs the C9 O-methylation to complete the biosynthesis of TAN-1612. This chain is FAD-dependent monooxygenase adaC, found in Aspergillus niger (strain ATCC MYA-4892 / CBS 513.88 / FGSC A1513).